The following is a 146-amino-acid chain: DNA-directed RNA polymerase subunit beta (146 aa).

It belongs to the RNA polymerase beta chain family. In terms of assembly, the RNAP catalytic core consists of 2 alpha, 1 beta, 1 beta' and 1 omega subunit. When a sigma factor is associated with the core the holoenzyme is formed, which can initiate transcription.

The catalysed reaction is RNA(n) + a ribonucleoside 5'-triphosphate = RNA(n+1) + diphosphate. DNA-dependent RNA polymerase catalyzes the transcription of DNA into RNA using the four ribonucleoside triphosphates as substrates. The sequence is that of DNA-directed RNA polymerase subunit beta (rpoB) from Liberibacter africanus (Citrus greening disease).